Here is a 642-residue protein sequence, read N- to C-terminus: Threonine--tRNA ligase (642 aa).

Residues 1-61 form the TGS domain; that stretch reads MPVITLPDGS…ENDATLAIIT (61 aa). The tract at residues 243–534 is catalytic; it reads DHRKIGKQLD…LTEEFAGFFP (292 aa). Zn(2+)-binding residues include Cys-334, His-385, and His-511.

This sequence belongs to the class-II aminoacyl-tRNA synthetase family. As to quaternary structure, homodimer. Zn(2+) is required as a cofactor.

It is found in the cytoplasm. The enzyme catalyses tRNA(Thr) + L-threonine + ATP = L-threonyl-tRNA(Thr) + AMP + diphosphate + H(+). Functionally, catalyzes the attachment of threonine to tRNA(Thr) in a two-step reaction: L-threonine is first activated by ATP to form Thr-AMP and then transferred to the acceptor end of tRNA(Thr). Also edits incorrectly charged L-seryl-tRNA(Thr). The protein is Threonine--tRNA ligase of Salmonella dublin (strain CT_02021853).